A 594-amino-acid polypeptide reads, in one-letter code: Dual specificity protein phosphatase CDC14A (594 aa).

The segment at 7–162 is a; the sequence is ELIGACEFMK…GLQHGFFDFE (156 aa). Residues 163–176 form a linker region; that stretch reads TFDVDEYEHYERVE. The interval 177–343 is b; sequence NGDFNWIVPG…QGDIFRSKLK (167 aa). Residues 179-336 enclose the Tyrosine-protein phosphatase domain; it reads DFNWIVPGKF…KQASLWVQGD (158 aa). Cys-278 functions as the Phosphocysteine intermediate in the catalytic mechanism. The interval 396-435 is disordered; it reads GDKLRALKSQRQPRTSPSCAFRSDDTKGHPRAVSQPFRLS. The segment covering 404–413 has biased composition (polar residues); that stretch reads SQRQPRTSPS. Ser-484 is subject to Phosphoserine. Residues 487–560 form a disordered region; it reads NLNAATDDPE…PGPHSAKTEE (74 aa). The span at 500–531 shows a compositional bias: polar residues; that stretch reads TSSSSKAGFTASPFTNLLNGSSQPTTRNYPEL. Positions 532-549 are enriched in low complexity; it reads NNNQYNRSSNSNGGNLNS. Ser-583 carries the phosphoserine modification.

Belongs to the protein-tyrosine phosphatase family. Non-receptor class CDC14 subfamily. In terms of assembly, interacts with KIF20A, which is required to localize CDC14 to the midzone of the mitotic spindle.

Its subcellular location is the nucleus. The protein localises to the cytoplasm. It localises to the cytoskeleton. The protein resides in the microtubule organizing center. It is found in the centrosome. Its subcellular location is the spindle pole. The protein localises to the spindle. It localises to the cell projection. The protein resides in the kinocilium. It is found in the stereocilium. It catalyses the reaction O-phospho-L-tyrosyl-[protein] + H2O = L-tyrosyl-[protein] + phosphate. The enzyme catalyses O-phospho-L-seryl-[protein] + H2O = L-seryl-[protein] + phosphate. It carries out the reaction O-phospho-L-threonyl-[protein] + H2O = L-threonyl-[protein] + phosphate. In terms of biological role, dual-specificity phosphatase. Required for centrosome separation and productive cytokinesis during cell division. Dephosphorylates SIRT2 around early anaphase. May dephosphorylate the APC subunit FZR1/CDH1, thereby promoting APC-FZR1 dependent degradation of mitotic cyclins and subsequent exit from mitosis. Required for normal hearing. This chain is Dual specificity protein phosphatase CDC14A (CDC14A), found in Homo sapiens (Human).